The sequence spans 107 residues: Small leucine-rich protein 1 (107 aa).

2 helical membrane passes run Ala-19–Ser-39 and Phe-53–Phe-73. Residues Ser-85–Thr-107 form a disordered region.

Its subcellular location is the membrane. This chain is Small leucine-rich protein 1 (SMLR1), found in Homo sapiens (Human).